A 205-amino-acid polypeptide reads, in one-letter code: Holliday junction branch migration complex subunit RuvA (205 aa).

A domain I region spans residues 1-64 (MIGKLKGVVD…EDMIRLYGFR (64 aa)). Residues 65–143 (SDAEREWFRL…AFAPVDPALV (79 aa)) are domain II. Residues 144–152 (RLAGAVEAR) form a flexible linker region. Positions 153–205 (TAPQPVADAISALVNLGYPQAQASAAVAAALQSAGAEAEAKTLIRLGLRELAR) are domain III.

The protein belongs to the RuvA family. Homotetramer. Forms an RuvA(8)-RuvB(12)-Holliday junction (HJ) complex. HJ DNA is sandwiched between 2 RuvA tetramers; dsDNA enters through RuvA and exits via RuvB. An RuvB hexamer assembles on each DNA strand where it exits the tetramer. Each RuvB hexamer is contacted by two RuvA subunits (via domain III) on 2 adjacent RuvB subunits; this complex drives branch migration. In the full resolvosome a probable DNA-RuvA(4)-RuvB(12)-RuvC(2) complex forms which resolves the HJ.

Its subcellular location is the cytoplasm. In terms of biological role, the RuvA-RuvB-RuvC complex processes Holliday junction (HJ) DNA during genetic recombination and DNA repair, while the RuvA-RuvB complex plays an important role in the rescue of blocked DNA replication forks via replication fork reversal (RFR). RuvA specifically binds to HJ cruciform DNA, conferring on it an open structure. The RuvB hexamer acts as an ATP-dependent pump, pulling dsDNA into and through the RuvAB complex. HJ branch migration allows RuvC to scan DNA until it finds its consensus sequence, where it cleaves and resolves the cruciform DNA. This Methylobacterium sp. (strain 4-46) protein is Holliday junction branch migration complex subunit RuvA.